A 193-amino-acid polypeptide reads, in one-letter code: Thymidine kinase (193 aa).

Residues 9 to 16 and 87 to 90 each bind ATP; these read STMNAGKS and DEAQ. Glutamate 88 serves as the catalytic Proton acceptor. Residues cysteine 145, cysteine 147, cysteine 182, and histidine 185 each contribute to the Zn(2+) site.

The protein belongs to the thymidine kinase family. In terms of assembly, homotetramer.

Its subcellular location is the cytoplasm. It catalyses the reaction thymidine + ATP = dTMP + ADP + H(+). The protein is Thymidine kinase of Haemophilus influenzae (strain ATCC 51907 / DSM 11121 / KW20 / Rd).